A 178-amino-acid chain; its full sequence is Cytidylate kinase 2 (178 aa).

ATP is bound at residue 7-15 (GKSGCGNTT).

The protein belongs to the cytidylate kinase family. Type 2 subfamily.

It is found in the cytoplasm. It carries out the reaction CMP + ATP = CDP + ADP. The enzyme catalyses dCMP + ATP = dCDP + ADP. The polypeptide is Cytidylate kinase 2 (Borrelia garinii subsp. bavariensis (strain ATCC BAA-2496 / DSM 23469 / PBi) (Borreliella bavariensis)).